A 392-amino-acid polypeptide reads, in one-letter code: Bone morphogenetic protein 15 (392 aa).

The signal sequence occupies residues 1–25 (MALLTILRILLWGVVLFMEQRVQMA). Residues 26–267 (KPGWPSTALL…ESSFLMRSVR (242 aa)) constitute a propeptide that is removed on maturation. Residues N85, N213, N236, N349, and N373 are each glycosylated (N-linked (GlcNAc...) asparagine). 3 disulfide bridges follow: C291/C357, C320/C389, and C324/C391.

This sequence belongs to the TGF-beta family. As to quaternary structure, homodimer. But, in contrast to other members of this family, cannot be disulfide-linked. Ovary specific.

The protein localises to the secreted. Its function is as follows. May be involved in follicular development. Oocyte-specific growth/differentiation factor that stimulates folliculogenesis and granulosa cell (GC) growth. This Mus musculus (Mouse) protein is Bone morphogenetic protein 15 (Bmp15).